A 138-amino-acid chain; its full sequence is MKPAARRRARECAVQAIYSWQLSGNSIADVELQFLSEQDVTGVDVTYFRELLSGVAVNAAKLDALMAPYLSRQLEELGQVEKAILRIAMFELSYRDDVPYKVAINEAIELAKVFGAEDSHKFVNGVLDKSGPAVRRKR.

Belongs to the NusB family.

Its function is as follows. Involved in transcription antitermination. Required for transcription of ribosomal RNA (rRNA) genes. Binds specifically to the boxA antiterminator sequence of the ribosomal RNA (rrn) operons. The polypeptide is Transcription antitermination protein NusB (Photorhabdus laumondii subsp. laumondii (strain DSM 15139 / CIP 105565 / TT01) (Photorhabdus luminescens subsp. laumondii)).